An 82-amino-acid polypeptide reads, in one-letter code: Defensin-like protein 22 (82 aa).

The N-terminal stretch at Met-1–Gly-24 is a signal peptide. 4 disulfide bridges follow: Cys-34–Cys-82, Cys-44–Cys-69, Cys-53–Cys-78, and Cys-57–Cys-80.

Belongs to the DEFL family.

Its subcellular location is the secreted. In Arabidopsis thaliana (Mouse-ear cress), this protein is Defensin-like protein 22.